Here is a 227-residue protein sequence, read N- to C-terminus: Cytochrome c oxidase subunit 2 (227 aa).

The Mitochondrial intermembrane portion of the chain corresponds to 1 to 14 (MAHPVQLSLQDATS). A helical membrane pass occupies residues 15 to 45 (PVMEELITFHDHAFMAMSLISFLVLYALLST). The Mitochondrial matrix portion of the chain corresponds to 46 to 59 (LTTKLTNTSITDAQ). A helical membrane pass occupies residues 60–87 (EMETIWTILPAIILILIALPSLRILYLT). Over 88 to 227 (DEVNDPSFTI…IFEMGPVLTL (140 aa)) the chain is Mitochondrial intermembrane. 6 residues coordinate Cu cation: His161, Cys196, Glu198, Cys200, His204, and Met207. A Mg(2+)-binding site is contributed by Glu198.

Belongs to the cytochrome c oxidase subunit 2 family. In terms of assembly, component of the cytochrome c oxidase (complex IV, CIV), a multisubunit enzyme composed of 14 subunits. The complex is composed of a catalytic core of 3 subunits MT-CO1, MT-CO2 and MT-CO3, encoded in the mitochondrial DNA, and 11 supernumerary subunits COX4I, COX5A, COX5B, COX6A, COX6B, COX6C, COX7A, COX7B, COX7C, COX8 and NDUFA4, which are encoded in the nuclear genome. The complex exists as a monomer or a dimer and forms supercomplexes (SCs) in the inner mitochondrial membrane with NADH-ubiquinone oxidoreductase (complex I, CI) and ubiquinol-cytochrome c oxidoreductase (cytochrome b-c1 complex, complex III, CIII), resulting in different assemblies (supercomplex SCI(1)III(2)IV(1) and megacomplex MCI(2)III(2)IV(2)). Found in a complex with TMEM177, COA6, COX18, COX20, SCO1 and SCO2. Interacts with TMEM177 in a COX20-dependent manner. Interacts with COX20. Interacts with COX16. Cu cation serves as cofactor.

It localises to the mitochondrion inner membrane. The enzyme catalyses 4 Fe(II)-[cytochrome c] + O2 + 8 H(+)(in) = 4 Fe(III)-[cytochrome c] + 2 H2O + 4 H(+)(out). Functionally, component of the cytochrome c oxidase, the last enzyme in the mitochondrial electron transport chain which drives oxidative phosphorylation. The respiratory chain contains 3 multisubunit complexes succinate dehydrogenase (complex II, CII), ubiquinol-cytochrome c oxidoreductase (cytochrome b-c1 complex, complex III, CIII) and cytochrome c oxidase (complex IV, CIV), that cooperate to transfer electrons derived from NADH and succinate to molecular oxygen, creating an electrochemical gradient over the inner membrane that drives transmembrane transport and the ATP synthase. Cytochrome c oxidase is the component of the respiratory chain that catalyzes the reduction of oxygen to water. Electrons originating from reduced cytochrome c in the intermembrane space (IMS) are transferred via the dinuclear copper A center (CU(A)) of subunit 2 and heme A of subunit 1 to the active site in subunit 1, a binuclear center (BNC) formed by heme A3 and copper B (CU(B)). The BNC reduces molecular oxygen to 2 water molecules using 4 electrons from cytochrome c in the IMS and 4 protons from the mitochondrial matrix. The chain is Cytochrome c oxidase subunit 2 (MT-CO2) from Macaca mulatta (Rhesus macaque).